The sequence spans 349 residues: tRNA pseudouridine synthase D (349 aa).

The interval 1–22 (MTDAPLVTAELPGSGGSLRRSP) is disordered. Asp-78 functions as the Nucleophile in the catalytic mechanism. Residues 150-304 (GLPNLFGPQR…AEGTRRAARL (155 aa)) form the TRUD domain.

Belongs to the pseudouridine synthase TruD family.

The enzyme catalyses uridine(13) in tRNA = pseudouridine(13) in tRNA. In terms of biological role, responsible for synthesis of pseudouridine from uracil-13 in transfer RNAs. In Anaeromyxobacter sp. (strain Fw109-5), this protein is tRNA pseudouridine synthase D.